The primary structure comprises 252 residues: MVSVCQVERNDVENLNKELFYSYIKSNKPVVFEKYRSQAIEKWTPDYLLSIIGDREVHVNMCTFGSMSDIVPMKFSEYLNKTLKNEFPINDSNGERIKKINKPYLRNFGMLDEFPILKEDVKNNESIFNKDVHNMVVMGSFIGCKDSATNFHKDTGENLVSVIHGKKFIVLIAPSDETNIKSKLSHDIEVQFDSNDFGSPIELHPAFSDCSKIYTTILTQGQSLFIPVGWIHYVHNIDTTISVSCWGKEMIM.

The JmjC domain maps to 103–252; sequence PYLRNFGMLD…VSCWGKEMIM (150 aa).

The sequence is that of JmjC domain-containing protein A (jcdA) from Dictyostelium discoideum (Social amoeba).